Reading from the N-terminus, the 370-residue chain is Seipin (370 aa).

The signal sequence occupies residues 1-18; sequence MNILLRLIVFALDPLGLG. The Cytoplasmic segment spans residues 19 to 55; sequence RRFLIRPAVNLGWNVYDRVRSKADEKVGTVRELVLRL. The helical transmembrane segment at 56-76 threads the bilayer; that stretch reads GLIAFAVVLIIWLAVFMYAAF. Residues 77-251 are Lumenal-facing; sequence YYVYMPAISH…GLRYIMFNWP (175 aa). A helical membrane pass occupies residues 252 to 272; the sequence is VLSAIVAISTNLFFILVVFLL. Residues 273–370 lie on the Cytoplasmic side of the membrane; that stretch reads SWYHWSDAKW…RPTKKTTADH (98 aa). The segment at 346-370 is disordered; the sequence is KSRSGKRESPDALRKRPTKKTTADH. The segment covering 350 to 359 has biased composition (basic and acidic residues); the sequence is GKRESPDALR.

As to expression, widely expressed, with highest levels detected in fat body, moderate levels detected in salivary gland, midgut and muscle, and weak expression detected in brain.

It localises to the endoplasmic reticulum membrane. The protein resides in the lipid droplet. Acts as a tissue-autonomous lipid modulator, preventing ectopic lipid accumulation in salivary gland (a non-adipose tissue) and in promoting lipid storage in fat tissue. Required for the growth and maturation of small nascent lipid droplets (LDs) into larger mature LDs. The chain is Seipin from Drosophila melanogaster (Fruit fly).